Reading from the N-terminus, the 531-residue chain is Probable mitochondrial-processing peptidase subunit beta, mitochondrial (531 aa).

A mitochondrion-targeting transit peptide spans 1–78 (MAMKNLLSLA…ENPDKRFLKY (78 aa)). Positions 30 to 50 (SAIDSVPASASPTALSPPPPH) are disordered. H141 serves as a coordination point for Zn(2+). E144 acts as the Proton acceptor in catalysis. Position 145 (H145) interacts with Zn(2+). E214 is a catalytic residue. Position 221 (E221) interacts with Zn(2+).

This sequence belongs to the peptidase M16 family. As to quaternary structure, heterodimer of an alpha subunit and a beta subunit subunits, forming the mitochondrial processing protease (MPP) in which the alpha subunit is involved in substrate recognition and binding and the beta subunit is the catalytic subunit. Component of the ubiquinol-cytochrome c oxidoreductase (cytochrome b-c1 complex, complex III, CIII), a multisubunit enzyme composed of 10 subunits. The complex is composed of 3 respiratory subunits cytochrome b (MT-CYB), cytochrome c1 (CYC1-1 or CYC1-2) and Rieske protein (UCR1-1 or UCR1-2), 2 core protein subunits MPPalpha1 (or MPPalpha2) and MPPB, and 5 low-molecular weight protein subunits QCR7-1 (or QCR7-2), UCRQ-1 (or UCRQ-2), QCR9, UCRY and probably QCR6-1 (or QCR6-2). The complex exists as an obligatory dimer and forms supercomplexes (SCs) in the inner mitochondrial membrane with NADH-ubiquinone oxidoreductase (complex I, CI), resulting in different assemblies (supercomplexes SCI(1)III(2) and SCI(2)III(4)). Zn(2+) is required as a cofactor.

Its subcellular location is the mitochondrion. The protein localises to the mitochondrion inner membrane. It catalyses the reaction Release of N-terminal transit peptides from precursor proteins imported into the mitochondrion, typically with Arg in position P2.. With respect to regulation, binding to the alpha subunit is required for catalytic activity. Functionally, catalytic subunit of the essential mitochondrial processing protease (MPP), which cleaves the mitochondrial sequence off newly imported precursors proteins. Preferentially, cleaves after an arginine at position P2. Component of the ubiquinol-cytochrome c oxidoreductase, a multisubunit transmembrane complex that is part of the mitochondrial electron transport chain which drives oxidative phosphorylation. The respiratory chain contains 3 multisubunit complexes succinate dehydrogenase (complex II, CII), ubiquinol-cytochrome c oxidoreductase (cytochrome b-c1 complex, complex III, CIII) and cytochrome c oxidase (complex IV, CIV), that cooperate to transfer electrons derived from NADH and succinate to molecular oxygen, creating an electrochemical gradient over the inner membrane that drives transmembrane transport and the ATP synthase. The cytochrome b-c1 complex catalyzes electron transfer from ubiquinol to cytochrome c, linking this redox reaction to translocation of protons across the mitochondrial inner membrane, with protons being carried across the membrane as hydrogens on the quinol. In the process called Q cycle, 2 protons are consumed from the matrix, 4 protons are released into the intermembrane space and 2 electrons are passed to cytochrome c. The sequence is that of Probable mitochondrial-processing peptidase subunit beta, mitochondrial (MPPbeta) from Arabidopsis thaliana (Mouse-ear cress).